The following is a 1120-amino-acid chain: Phosphatidylinositide phosphatase SAC2 (1120 aa).

The region spanning 167-518 is the SAC domain; the sequence is YKIFMDSDSF…GDTISRQYAG (352 aa). In terms of domain architecture, hSac2 spans 593-760; sequence RGAQEQVSLL…RHSKPHEDIM (168 aa). Disordered regions lie at residues 837 to 881 and 979 to 1008; these read SSLE…SREN and PAPKPQGPQVPLAPDAKLGSSHSQNQLPRP. Basic and acidic residues predominate over residues 851-860; that stretch reads LKDHGPHSEE. 2 stretches are compositionally biased toward polar residues: residues 864-879 and 998-1007; these read DSDSYNSDEQPCSGSR and SSHSQNQLPR.

It is found in the membrane. The protein localises to the clathrin-coated pit. The protein resides in the early endosome. It localises to the recycling endosome. The enzyme catalyses a myo-inositol phosphate + H2O = myo-inositol + phosphate. Its function is as follows. Inositol 4-phosphatase which mainly acts on phosphatidylinositol 4-phosphate. May be functionally linked to OCRL, which converts phosphatidylinositol 4,5-bisphosphate to phosphatidylinositol, for a sequential dephosphorylation of phosphatidylinositol 4,5-bisphosphate at the 5 and 4 position of inositol, thus playing an important role in the endocytic recycling. This Danio rerio (Zebrafish) protein is Phosphatidylinositide phosphatase SAC2.